The primary structure comprises 229 residues: Enolase-phosphatase E1 (229 aa).

A disordered region spans residues Asp206–Ala229. The segment covering Arg218–Ala229 has biased composition (basic and acidic residues).

It belongs to the HAD-like hydrolase superfamily. MasA/MtnC family. As to quaternary structure, monomer. Requires Mg(2+) as cofactor.

It carries out the reaction 5-methylsulfanyl-2,3-dioxopentyl phosphate + H2O = 1,2-dihydroxy-5-(methylsulfanyl)pent-1-en-3-one + phosphate. The protein operates within amino-acid biosynthesis; L-methionine biosynthesis via salvage pathway; L-methionine from S-methyl-5-thio-alpha-D-ribose 1-phosphate: step 3/6. It functions in the pathway amino-acid biosynthesis; L-methionine biosynthesis via salvage pathway; L-methionine from S-methyl-5-thio-alpha-D-ribose 1-phosphate: step 4/6. In terms of biological role, bifunctional enzyme that catalyzes the enolization of 2,3-diketo-5-methylthiopentyl-1-phosphate (DK-MTP-1-P) into the intermediate 2-hydroxy-3-keto-5-methylthiopentenyl-1-phosphate (HK-MTPenyl-1-P), which is then dephosphorylated to form the acireductone 1,2-dihydroxy-3-keto-5-methylthiopentene (DHK-MTPene). The polypeptide is Enolase-phosphatase E1 (Klebsiella oxytoca).